The chain runs to 179 residues: Large ribosomal subunit protein uL5 (179 aa).

The protein belongs to the universal ribosomal protein uL5 family. Part of the 50S ribosomal subunit; part of the 5S rRNA/L5/L18/L25 subcomplex. Contacts the 5S rRNA and the P site tRNA. Forms a bridge to the 30S subunit in the 70S ribosome.

This is one of the proteins that bind and probably mediate the attachment of the 5S RNA into the large ribosomal subunit, where it forms part of the central protuberance. In the 70S ribosome it contacts protein S13 of the 30S subunit (bridge B1b), connecting the 2 subunits; this bridge is implicated in subunit movement. Contacts the P site tRNA; the 5S rRNA and some of its associated proteins might help stabilize positioning of ribosome-bound tRNAs. This Pseudoalteromonas translucida (strain TAC 125) protein is Large ribosomal subunit protein uL5.